A 483-amino-acid chain; its full sequence is Protein hedgehog (483 aa).

The signal sequence occupies residues Met-1–Ser-19. Residues Leu-20–Ser-92 constitute a propeptide that is removed on maturation. The tract at residues Glu-28–Ala-57 is disordered. A compositionally biased stretch (low complexity) spans Ser-41 to Asn-50. A lipid anchor (N-palmitoyl cysteine) is attached at Cys-93. Residues Glu-157, Glu-158, Asp-163, Thr-193, Glu-194, Asp-197, and Asp-199 each contribute to the Ca(2+) site. The Cholesterol glycine ester moiety is linked to residue Gly-266.

It belongs to the hedgehog family. In terms of assembly, interacts with shf. In terms of processing, the C-terminal part of the hedgehog protein precursor displays an autoproteolysis activity that results in the cleavage of the full-length protein into two parts (N-product and C-product). In addition, the C-terminal part displays a cholesterol transferase activity that results by the covalent attachment of a cholesterol moiety to the C-terminal of the newly generated N-product. The N-product is the active species in both local and long-range signaling, whereas the C-product has no signaling activity. Post-translationally, cholesterylation is required for N-product targeting to lipid rafts and multimerization. N-palmitoylation by Rasp of the hedgehog N-product, within the secretory pathway, is required for the embryonic and larval patterning activities of the hedgehog signal.

It is found in the nucleus. The protein resides in the cytoplasm. The protein localises to the cell membrane. It catalyses the reaction glycyl-L-cysteinyl-[protein] + cholesterol + H(+) = [protein]-C-terminal glycyl cholesterol ester + N-terminal L-cysteinyl-[protein]. In terms of biological role, the C-terminal part of the hedgehog protein precursor displays an autoproteolysis activity that results in the cleavage of the full-length protein into two parts (N-product and C-product). In addition, the C-terminal part displays a cholesterol transferase activity that results by the covalent attachment of a cholesterol moiety to the C-terminal of the newly generated N-product. Once cleaved, the C-product has no signaling activity and diffuses from the cell. Its function is as follows. The dually lipidated hedgehog protein N-product is a morphogen which is essential for a variety of patterning events during development. Establishes the anterior-posterior axis of the embryonic segments and patterns the larval imaginal disks. Binds to the patched (ptc) receptor, which functions in association with smoothened (smo), to activate the transcription of target genes wingless (wg), decapentaplegic (dpp) and ptc. In the absence of hh, ptc represses the constitutive signaling activity of smo through fused (fu). Essential component of a signaling pathway which regulates the Duox-dependent gut immune response to bacterial uracil; required to activate Cad99C-dependent endosome formation, norpA-dependent Ca2+ mobilization and p38 MAPK, which are essential steps in the Duox-dependent production of reactive oxygen species (ROS) in response to intestinal bacterial infection. During photoreceptor differentiation, it up-regulates transcription of Ubr3, which in turn promotes the hh-signaling pathway by mediating the ubiquitination and degradation of cos. The polypeptide is Protein hedgehog (Drosophila virilis (Fruit fly)).